A 140-amino-acid chain; its full sequence is Ribosomal RNA large subunit methyltransferase H (140 aa).

S-adenosyl-L-methionine contacts are provided by residues L58, G90, and 108–113 (LSLLTF).

The protein belongs to the RNA methyltransferase RlmH family. In terms of assembly, homodimer.

It is found in the cytoplasm. It catalyses the reaction pseudouridine(1915) in 23S rRNA + S-adenosyl-L-methionine = N(3)-methylpseudouridine(1915) in 23S rRNA + S-adenosyl-L-homocysteine + H(+). Functionally, specifically methylates the pseudouridine at position 1915 (m3Psi1915) in 23S rRNA. The protein is Ribosomal RNA large subunit methyltransferase H of Protochlamydia amoebophila (strain UWE25).